We begin with the raw amino-acid sequence, 171 residues long: Lipoprotein signal peptidase (171 aa).

3 helical membrane passes run 8–28 (SFLW…YIVV), 64–84 (WQQY…VYFL), and 96–118 (SAYA…NGFV). Active-site residues include D120 and D138. Residues 133–153 (VFNIADIAICIGAGLLALDAF) traverse the membrane as a helical segment.

It belongs to the peptidase A8 family.

The protein localises to the cell inner membrane. The enzyme catalyses Release of signal peptides from bacterial membrane prolipoproteins. Hydrolyzes -Xaa-Yaa-Zaa-|-(S,diacylglyceryl)Cys-, in which Xaa is hydrophobic (preferably Leu), and Yaa (Ala or Ser) and Zaa (Gly or Ala) have small, neutral side chains.. Its pathway is protein modification; lipoprotein biosynthesis (signal peptide cleavage). In terms of biological role, this protein specifically catalyzes the removal of signal peptides from prolipoproteins. This chain is Lipoprotein signal peptidase, found in Haemophilus influenzae (strain 86-028NP).